A 178-amino-acid polypeptide reads, in one-letter code: MAESVTIARPYAEALFRTAKESGNLAKWSEQVSLLGQVAANPDVSSAIGDPNVAAPQLVDLFRSACGTAVDAELSNFIQLLSNNDRLGLLPEIAGLYETYKRAEEGTKQADIVSAFPIDDNQVKALIPQLEAVFKTKLEAAVSVDPTLIGGIKVIVGDQMLDASVRGKLDAMATALNN.

Belongs to the ATPase delta chain family. In terms of assembly, F-type ATPases have 2 components, F(1) - the catalytic core - and F(0) - the membrane proton channel. F(1) has five subunits: alpha(3), beta(3), gamma(1), delta(1), epsilon(1). F(0) has three main subunits: a(1), b(2) and c(10-14). The alpha and beta chains form an alternating ring which encloses part of the gamma chain. F(1) is attached to F(0) by a central stalk formed by the gamma and epsilon chains, while a peripheral stalk is formed by the delta and b chains.

It is found in the cell inner membrane. In terms of biological role, f(1)F(0) ATP synthase produces ATP from ADP in the presence of a proton or sodium gradient. F-type ATPases consist of two structural domains, F(1) containing the extramembraneous catalytic core and F(0) containing the membrane proton channel, linked together by a central stalk and a peripheral stalk. During catalysis, ATP synthesis in the catalytic domain of F(1) is coupled via a rotary mechanism of the central stalk subunits to proton translocation. Its function is as follows. This protein is part of the stalk that links CF(0) to CF(1). It either transmits conformational changes from CF(0) to CF(1) or is implicated in proton conduction. This chain is ATP synthase subunit delta, found in Dechloromonas aromatica (strain RCB).